Reading from the N-terminus, the 260-residue chain is Salicylic acid-binding protein 2 (260 aa).

Salicylate is bound by residues A13, S81, and K159. S81 functions as the Acyl-ester intermediate in the catalytic mechanism. Catalysis depends on charge relay system residues D210 and H238. Salicylate-binding residues include H238, L253, and H257.

It belongs to the AB hydrolase superfamily. Methylesterase family.

The catalysed reaction is methyl salicylate + H2O = salicylate + methanol + H(+). Its pathway is plant hormone biosynthesis. Its activity is regulated as follows. Esterase activity is down-regulated by salicylic acid (SA) or by tetraFA, a synthetic SA analog. Functionally, required to convert methyl salicylate (MeSA) to salicylic acid (SA) as part of the signal transduction pathways that activate systemic acquired resistance in systemic tissue. MeSA is believed to be an inactive form that needs to be demethylated to exert a biological effect. Also able to catalyze the conversion of acibenzolar-S-methyl into acibenzolar to induce systemic acquired resistance. The chain is Salicylic acid-binding protein 2 from Nicotiana tabacum (Common tobacco).